The primary structure comprises 926 residues: Alpha-aminoadipic semialdehyde synthase, mitochondrial (926 aa).

The transit peptide at methionine 1–alanine 27 directs the protein to the mitochondrion. A lysine-ketoglutarate reductase region spans residues leucine 28 to leucine 455. 2 positions are modified to N6-acetyllysine: lysine 48 and lysine 56. Lysine 93 carries the post-translational modification N6-acetyllysine; alternate. N6-succinyllysine; alternate is present on lysine 93. Lysine 128 is subject to N6-acetyllysine. Position 138 is an N6-acetyllysine; alternate (lysine 138). N6-succinyllysine; alternate is present on lysine 138. Residue lysine 274 is modified to N6-succinyllysine. Lysine 286 carries the N6-acetyllysine; alternate modification. Lysine 286 carries the N6-succinyllysine; alternate modification. Lysine 333 carries the N6-succinyllysine modification. Lysine 458 is modified (N6-acetyllysine; alternate). N6-succinyllysine; alternate is present on lysine 458. The segment at methionine 477–leucine 926 is saccharopine dehydrogenase. NAD(+)-binding residues include serine 488, aspartate 512, and glutamine 516. Lysine 523 and lysine 535 each carry N6-acetyllysine; alternate. N6-succinyllysine; alternate is present on residues lysine 523 and lysine 535. NAD(+) is bound by residues leucine 554, alanine 576, and serine 577. Serine 577–tyrosine 578 is a binding site for L-saccharopine. An N6-acetyllysine; alternate modification is found at lysine 584. N6-succinyllysine; alternate is present on lysine 584. NAD(+)-binding residues include leucine 603, aspartate 604, and proline 605. Aspartate 604 contributes to the L-saccharopine binding site. Arginine 703 is an L-saccharopine binding site. Lysine 707 is modified (N6-acetyllysine). An L-saccharopine-binding site is contributed by threonine 724–arginine 726. Lysine 732 bears the N6-succinyllysine mark. An N6-acetyllysine modification is found at lysine 739. The residue at position 761 (lysine 761) is an N6-acetyllysine; alternate. Lysine 761 is subject to N6-succinyllysine; alternate. Lysine 780 carries the N6-acetyllysine modification.

In the N-terminal section; belongs to the AlaDH/PNT family. It in the C-terminal section; belongs to the saccharopine dehydrogenase family. As to quaternary structure, homotetramer.

Its subcellular location is the mitochondrion. The enzyme catalyses L-saccharopine + NADP(+) + H2O = L-lysine + 2-oxoglutarate + NADPH + H(+). The catalysed reaction is L-saccharopine + NAD(+) + H2O = (S)-2-amino-6-oxohexanoate + L-glutamate + NADH + H(+). Its pathway is amino-acid degradation; L-lysine degradation via saccharopine pathway; glutaryl-CoA from L-lysine: step 1/6. It participates in amino-acid degradation; L-lysine degradation via saccharopine pathway; glutaryl-CoA from L-lysine: step 2/6. Functionally, bifunctional enzyme that catalyzes the first two steps in lysine degradation. This is Alpha-aminoadipic semialdehyde synthase, mitochondrial from Bos taurus (Bovine).